Reading from the N-terminus, the 286-residue chain is MTALLLDGRGLAKELKAQISQQGAEFKARTGYAPQLVVIQVAGNAASDWYVRSIRRSCEGVGFGFALQRLPETSDQATLEAAIQQASNDPAIHGIIIQMPLPSQLSADGAVAALNPQKDVDGLHPTNAGRLAQGLTALVPNTPAGGMALLDRYQINLAGKHAVVVGRSNVVGKPLAQLLLARHATVTICHSRTANLAEVIRQGDIVAAAVGKAGLVTGEMLKPGAVVLDFGINEVAEGQVVGDVDWESASKVASAITPVPGGTGPVTNMMLLQNTLQAAQSLAEQA.

NADP(+)-binding positions include 166–168 (GRS), S191, and I232.

It belongs to the tetrahydrofolate dehydrogenase/cyclohydrolase family. As to quaternary structure, homodimer.

It carries out the reaction (6R)-5,10-methylene-5,6,7,8-tetrahydrofolate + NADP(+) = (6R)-5,10-methenyltetrahydrofolate + NADPH. The enzyme catalyses (6R)-5,10-methenyltetrahydrofolate + H2O = (6R)-10-formyltetrahydrofolate + H(+). The protein operates within one-carbon metabolism; tetrahydrofolate interconversion. Catalyzes the oxidation of 5,10-methylenetetrahydrofolate to 5,10-methenyltetrahydrofolate and then the hydrolysis of 5,10-methenyltetrahydrofolate to 10-formyltetrahydrofolate. The chain is Bifunctional protein FolD from Herpetosiphon aurantiacus (strain ATCC 23779 / DSM 785 / 114-95).